The sequence spans 307 residues: Chaperone protein DnaJ 2 (307 aa).

The J domain occupies 6–71 (NYYQILGVPR…TKRRELDSRL (66 aa)). A disordered region spans residues 69-133 (SRLFGRFRRP…TRRTKVVSPA (65 aa)). The segment covering 88–99 (NGGRSPNGTSVN) has biased composition (polar residues). Residues 100 to 114 (GQVRTPTGRTGTRQP) are compositionally biased toward low complexity.

This sequence belongs to the DnaJ family. In terms of assembly, homodimer. Requires Zn(2+) as cofactor.

The protein resides in the cytoplasm. Participates actively in the response to hyperosmotic and heat shock by preventing the aggregation of stress-denatured proteins and by disaggregating proteins, also in an autonomous, DnaK-independent fashion. Unfolded proteins bind initially to DnaJ; upon interaction with the DnaJ-bound protein, DnaK hydrolyzes its bound ATP, resulting in the formation of a stable complex. GrpE releases ADP from DnaK; ATP binding to DnaK triggers the release of the substrate protein, thus completing the reaction cycle. Several rounds of ATP-dependent interactions between DnaJ, DnaK and GrpE are required for fully efficient folding. Also involved, together with DnaK and GrpE, in the DNA replication of plasmids through activation of initiation proteins. This is Chaperone protein DnaJ 2 (dnaJ2) from Synechocystis sp. (strain ATCC 27184 / PCC 6803 / Kazusa).